Consider the following 106-residue polypeptide: MNSILGLIDTVTNTIGKAQQIELDKAALGQQRELALQRMNLDRQALNNQVEQFNKILEQRVQGPLQSVRLARAAGFRVDPYSYTNQNFYDDQLNAIRLSYRNLFKN.

The protein belongs to the vesivirus VP2 protein family. In terms of assembly, homooligomer. The portal-like structure consists in 12 copies of VP2. Interacts with capsid protein VP1.

Its subcellular location is the virion. It localises to the host cytoplasm. In terms of biological role, minor structural protein that forms a portal-like structure at a unique three-fold axis of symmetry, following binding to the host receptor. The virion attaches to feline junctional adhesion molecule A (F11R). Once attached, the virion is endocytosed. Acidification of the endosome induces conformational change of capsid protein thereby injecting virus genomic RNA into host cytoplasm. The channel formed by VP2 may allow the delivery of the viral genome through the host endosomal membrane. This chain is Minor capsid protein VP2, found in Feline calicivirus (strain Cat/United States/Urbana/1960) (FCV).